The chain runs to 256 residues: Phosphatidylglycerol--prolipoprotein diacylglyceryl transferase 2 (256 aa).

Transmembrane regions (helical) follow at residues 11–31, 46–66, and 83–103; these read LKIY…TLLF, FNAT…LYII, and FGNG…IALC. Arginine 130 serves as a coordination point for a 1,2-diacyl-sn-glycero-3-phospho-(1'-sn-glycerol). A run of 3 helical transmembrane segments spans residues 142-162, 164-184, and 221-241; these read AETT…PAGV, LYPT…FLLW, and VGLL…GILL.

It belongs to the Lgt family.

The protein localises to the cell membrane. The enzyme catalyses L-cysteinyl-[prolipoprotein] + a 1,2-diacyl-sn-glycero-3-phospho-(1'-sn-glycerol) = an S-1,2-diacyl-sn-glyceryl-L-cysteinyl-[prolipoprotein] + sn-glycerol 1-phosphate + H(+). It participates in protein modification; lipoprotein biosynthesis (diacylglyceryl transfer). Catalyzes the transfer of the diacylglyceryl group from phosphatidylglycerol to the sulfhydryl group of the N-terminal cysteine of a prolipoprotein, the first step in the formation of mature lipoproteins. This is Phosphatidylglycerol--prolipoprotein diacylglyceryl transferase 2 from Clostridium perfringens (strain 13 / Type A).